The sequence spans 225 residues: UPF0758 protein XAC3915 (225 aa).

Positions 102 to 224 (ALSDPPSVGR…PVSFAERGWL (123 aa)) constitute an MPN domain. Zn(2+) is bound by residues H173, H175, and D186. Residues 173–186 (HNHPSGNPEPSEAD) carry the JAMM motif motif.

It belongs to the UPF0758 family.

This chain is UPF0758 protein XAC3915, found in Xanthomonas axonopodis pv. citri (strain 306).